We begin with the raw amino-acid sequence, 223 residues long: Prolactin-3D4 (223 aa).

A signal peptide spans 1 to 28 (MQLTLTLSGSSMQLLLLVSNLLLWENMA). Intrachain disulfides connect Cys80–Cys198 and Cys215–Cys223. Residues Asn108 and Asn157 are each glycosylated (N-linked (GlcNAc...) asparagine).

This sequence belongs to the somatotropin/prolactin family. In terms of processing, N-glycosylated.

The protein resides in the secreted. This is Prolactin-3D4 (Prl3d4) from Rattus norvegicus (Rat).